Here is a 489-residue protein sequence, read N- to C-terminus: MNAALIIIFGVLLLSIFLGIRAQKGKDMNLEQWTVGGRGFGTVFVFLLMAGEIYTTFTFLGGSGWAYGKGGPAFYIIAYGCLAYILSYWLLPAVWTYAKQHKLMSQSDFFTKKYNSPLLGILVSLVGIAALIPYLVLQLKGLGLIVSETSYGKITPTAAIWIGAVSITVYVMVSGIHGSAWISVVKDIMILVVVLFLGVYLPIHYYGGFQDMFQQIETAKPGFLTLPESGQSVAWFSSTVLLTALGFYMWPHTFSASYSAENPKVFRKNAIIMPLYQLVLLFVLFVGFAAILQVPDLNGADGDLSLLRLSLQAFDPWFVGIIGAAGLLTALVPGSMILMSASTLFAKNVYKVIAPRTTEQQVSALAKFLVPVIALISVYFTFKGGNTIVTLLLMGYSLVTQLFPALLFSLLKHNMVTKQGAFAGIIAGVGAVTYITMTETTIGTLFPALPQAAKDLNVGIVALLLNITVMMAVSLMTRKAKSAAADQAA.

13 helical membrane passes run M1–R21, F40–L60, F74–V94, P117–L137, A158–G178, I188–G208, A234–F254, I271–I291, F318–L338, V362–F382, I388–F408, F422–I442, and L456–M476.

The protein belongs to the sodium:solute symporter (SSF) (TC 2.A.21) family.

It localises to the cell membrane. This is an uncharacterized protein from Bacillus subtilis (strain 168).